Reading from the N-terminus, the 310-residue chain is Homoserine kinase (310 aa).

91 to 101 serves as a coordination point for ATP; the sequence is PIGSGLGSSAC.

The protein belongs to the GHMP kinase family. Homoserine kinase subfamily.

It is found in the cytoplasm. The enzyme catalyses L-homoserine + ATP = O-phospho-L-homoserine + ADP + H(+). The protein operates within amino-acid biosynthesis; L-threonine biosynthesis; L-threonine from L-aspartate: step 4/5. Functionally, catalyzes the ATP-dependent phosphorylation of L-homoserine to L-homoserine phosphate. The sequence is that of Homoserine kinase from Escherichia coli O139:H28 (strain E24377A / ETEC).